The sequence spans 608 residues: Phosphatidylinositol/phosphatidylcholine transfer protein SFH4 (608 aa).

The tract at residues 1-33 is disordered; the sequence is MSGPLDRFTSPCFSNNGEKREKKSDFEVSEDEK. Residues 17-33 show a composition bias toward basic and acidic residues; the sequence is GEKREKKSDFEVSEDEK. The CRAL-TRIO domain occupies 146 to 320; sequence ELDEVLRYYP…FFGGTCTCAD (175 aa). The tract at residues 358-403 is disordered; the sequence is DSQISSSDKPTYSLKVSDTSTAKSGSELEEMASPKTNTNNHVPKLT. Positions 371–381 are enriched in polar residues; the sequence is LKVSDTSTAKS. Residues 526–572 adopt a coiled-coil conformation; the sequence is ISSVLSRLGDLEKQIENLHSRKSEMPHEKEELLNAAVYRVDALEAEL.

The protein belongs to the SFH family.

The protein localises to the golgi apparatus membrane. Its subcellular location is the cell membrane. Required for transport of secretory proteins from the Golgi complex. Catalyzes the transfer of phosphatidylinositol and phosphatidylcholine between membranes in vitro. In Arabidopsis thaliana (Mouse-ear cress), this protein is Phosphatidylinositol/phosphatidylcholine transfer protein SFH4 (SFH4).